A 421-amino-acid chain; its full sequence is Glutamyl-tRNA reductase (421 aa).

Residues Thr-49–Arg-52, Ser-109, Glu-114–Gln-116, and Gln-120 contribute to the substrate site. The active-site Nucleophile is the Cys-50. Gly-189 to Cys-194 is a binding site for NADP(+).

Belongs to the glutamyl-tRNA reductase family. Homodimer.

The enzyme catalyses (S)-4-amino-5-oxopentanoate + tRNA(Glu) + NADP(+) = L-glutamyl-tRNA(Glu) + NADPH + H(+). It participates in porphyrin-containing compound metabolism; protoporphyrin-IX biosynthesis; 5-aminolevulinate from L-glutamyl-tRNA(Glu): step 1/2. Its function is as follows. Catalyzes the NADPH-dependent reduction of glutamyl-tRNA(Glu) to glutamate 1-semialdehyde (GSA). This Magnetococcus marinus (strain ATCC BAA-1437 / JCM 17883 / MC-1) protein is Glutamyl-tRNA reductase.